The chain runs to 518 residues: Protein PAC2 (518 aa).

One can recognise a CAP-Gly domain in the interval 23 to 67 (VIKPWPSVKAYGVEWDDHSRGKHSGTIDDIHYFDVQIPNSGSFLK). LRR repeat units follow at residues 153 to 174 (NVKD…CEFI), 179 to 201 (NLES…KEYD), 204 to 227 (HIKT…LKSF), 229 to 252 (TLKM…ENEI), 255 to 276 (TLEE…PKNL), 277 to 298 (TLKG…AIYS), 299 to 319 (VESL…DDLN), and 324 to 345 (SLKN…INVE).

It localises to the cytoplasm. Its subcellular location is the cytoskeleton. Functionally, required for viability in the absence of the kinesin-related CIN8 mitotic motor. Seems to be involved in the assembly of alpha-tubulin. The polypeptide is Protein PAC2 (PAC2) (Saccharomyces cerevisiae (strain ATCC 204508 / S288c) (Baker's yeast)).